The primary structure comprises 567 residues: Maltase A2 (567 aa).

The first 23 residues, 1–23, serve as a signal peptide directing secretion; it reads MPKWAHLGLAALLLISTTQEGTA. N30, N124, and N198 each carry an N-linked (GlcNAc...) asparagine glycan. D226 acts as the Nucleophile in catalysis. The Proton donor role is filled by E298. A glycan (N-linked (GlcNAc...) asparagine) is linked at N312.

It belongs to the glycosyl hydrolase 13 family.

The catalysed reaction is Hydrolysis of terminal, non-reducing (1-&gt;4)-linked alpha-D-glucose residues with release of alpha-D-glucose.. This is Maltase A2 (Mal-A2) from Drosophila melanogaster (Fruit fly).